The sequence spans 3491 residues: Erythronolide synthase EryA1 (3491 aa).

Residues 1–484 (MSGPRSRTTS…TPRALAEALA (484 aa)) are loading domain. Positions 57–372 (VFVFPGQGAQ…AAQAFTGGVA (316 aa)) are acyltransferase 1. Ser-145 serves as the catalytic Acyl-ester intermediate; for acyltransferase 1 activity. The disordered stretch occupies residues 386-410 (PALCRSSRRPRRKTSRPSPASTGTR). Residues 391-400 (SSRRPRRKTS) show a composition bias toward basic residues. Positions 412–487 (RTCCERLLAV…ALAEALAAGT (76 aa)) constitute a Carrier 1 domain. Ser-447 bears the O-(pantetheine 4'-phosphoryl)serine mark. A Ketosynthase family 3 (KS3) 1 domain is found at 504–928 (GEPVAVVAMA…GTNAHAIIEE (425 aa)). Module stretches follow at residues 507–1958 (VAVV…AHLA) and 1982–3404 (IAIV…GFLD). The Acyl-thioester intermediate; for beta-ketoacyl synthase 1 activity role is filled by Cys-677. Residues His-812 and His-850 each act as for beta-ketoacyl synthase 1 activity in the active site. The interval 1031-1352 (VFVFPGQGWQ…ALSRAFAAGV (322 aa)) is acyltransferase 2. Ser-1128 acts as the Acyl-ester intermediate; for acyltransferase 2 activity in catalysis. The tract at residues 1613 to 1790 (GTVLVTGGTG…ATAVAWGTWA (178 aa)) is beta-ketoacyl reductase 1. NADP(+) contacts are provided by residues 1621-1624 (TGGV), 1644-1647 (SRSG), 1673-1674 (DV), Lys-1723, and 1745-1746 (FS). The active-site For beta-ketoacyl reductase 1 activity is the Tyr-1760. The region spanning 1886-1961 (EALFELVRSH…TLAAHLAAEL (76 aa)) is the Carrier 2 domain. Position 1921 is an O-(pantetheine 4'-phosphoryl)serine (Ser-1921). A Ketosynthase family 3 (KS3) 2 domain is found at 1979 to 2402 (DEPIAIVGMA…GTNAHVIIAE (424 aa)). The active-site Acyl-thioester intermediate; for beta-ketoacyl synthase 2 activity is the Cys-2148. Active-site for beta-ketoacyl synthase 2 activity residues include His-2283 and His-2323. The interval 2508 to 2827 (VFVFPGQGAQ…LADAHTRGVA (320 aa)) is acyltransferase 3. Ser-2598 functions as the Acyl-ester intermediate; for acyltransferase 3 activity in the catalytic mechanism. The interval 3057–3233 (GTILVTGGTA…ATSVAWGLWA (177 aa)) is beta-ketoacyl reductase 2. NADP(+) contacts are provided by residues 3065–3068 (TAGL), 3088–3091 (SRRG), 3117–3118 (DV), Lys-3168, and 3188–3189 (FS). Tyr-3203 acts as the For beta-ketoacyl reductase 2 activity in catalysis. Residues 3329–3407 (ERTAELVRLV…AVAGFLDAEL (79 aa)) form the Carrier 3 domain. At Ser-3367 the chain carries O-(pantetheine 4'-phosphoryl)serine. The disordered stretch occupies residues 3456–3491 (QAADASGTGANPSGDDLGEAGVDELLEALGRELDGD). A compositionally biased stretch (acidic residues) spans 3471-3481 (DLGEAGVDELL).

As to quaternary structure, homodimer. Erythronolide synthase is composed of EryAI, EryAII and EryAIII multimodular (2 modules) polypeptides each coding for a functional synthase subunit which participates in 2 of the six FAS-like elongation steps required for formation of the polyketide. Module 1, 2, 3, 4, 5, and 6 participating in biosynthesis steps 1, 2, 3, 4, 5, and 6, respectively. It depends on pantetheine 4'-phosphate as a cofactor.

The catalysed reaction is 6 (S)-methylmalonyl-CoA + propanoyl-CoA + 6 NADPH + 12 H(+) = 6-deoxyerythronolide B + 6 CO2 + 6 NADP(+) + 7 CoA + H2O. The protein operates within antibiotic biosynthesis; erythromycin biosynthesis. Functionally, involved in the biosynthesis of antibiotic erythromycin via the biosynthesis of its aglycone precursor, 6-deoxyerythronolide B (6-dEB). In Saccharopolyspora erythraea (Streptomyces erythraeus), this protein is Erythronolide synthase EryA1 (eryA).